The primary structure comprises 255 residues: 14-3-3 protein epsilon (255 aa).

N-acetylmethionine is present on Met1. Lys50 carries the post-translational modification N6-acetyllysine; alternate. Residue Lys50 forms a Glycyl lysine isopeptide (Lys-Gly) (interchain with G-Cter in SUMO2); alternate linkage. Ser65 carries the phosphoserine modification. Residues Lys69, Lys118, and Lys123 each carry the N6-acetyllysine modification. Position 131 is a phosphotyrosine (Tyr131). Thr137 is modified (phosphothreonine). Position 210 is a phosphoserine (Ser210). A Phosphothreonine modification is found at Thr232. A disordered region spans residues 234-255 (DMQGDGEEQNKEALQDVEDENQ).

It belongs to the 14-3-3 family. As to quaternary structure, homodimer. Heterodimerizes with YWHAZ. Interacts with PKA-phosphorylated AANAT. Interacts with ABL1 (phosphorylated form); the interaction retains it in the cytoplasm. Interacts with ARHGEF28. Interacts with BEX3. Weakly interacts with CDKN1B. Interacts with the 'Thr-369' phosphorylated form of DAPK2. Interacts with DENND1A. Interacts with GAB2. Interacts with phosphorylated GRB10. Interacts with KSR1. Interacts with NDEL1. Interacts with PI4KB, TBC1D22A and TBC1D22B. Interacts with the phosphorylated (by AKT1) form of SRPK2. Interacts with TIAM2. Interacts with the 'Ser-1134' and 'Ser-1161' phosphorylated form of SOS1. Interacts with ZFP36 (via phosphorylated form). Interacts with SLITRK1. Interacts with HSF1 (via phosphorylated form); this interaction promotes HSF1 sequestration in the cytoplasm in a ERK-dependent manner. Interacts with RIPOR2. Interacts with KLHL22; required for the nuclear localization of KLHL22 upon amino acid starvation. Interacts with CRTC1. Interacts with CRTC2 (probably when phosphorylated at 'Ser-171'). Interacts with CRTC3 (probably when phosphorylated at 'Ser-162' and/or 'Ser-273'). Interacts with ATP2B1 and ATP2B3; this interaction inhibits calcium-transporting ATPase activity. Interacts with MEFV. Interacts with RNF115. Interacts with GPR15; this interaction promotes ER-to-Golgi transport of GPR15.

Its subcellular location is the nucleus. The protein localises to the cytoplasm. It localises to the melanosome. Adapter protein implicated in the regulation of a large spectrum of both general and specialized signaling pathways. Binds to a large number of partners, usually by recognition of a phosphoserine or phosphothreonine motif. Binding generally results in the modulation of the activity of the binding partner. Positively regulates phosphorylated protein HSF1 nuclear export to the cytoplasm. The polypeptide is 14-3-3 protein epsilon (Ywhae) (Rattus norvegicus (Rat)).